A 353-amino-acid polypeptide reads, in one-letter code: Protein RecA (353 aa).

Residue 67–74 coordinates ATP; it reads GPESSGKT.

Belongs to the RecA family.

The protein localises to the cytoplasm. Functionally, can catalyze the hydrolysis of ATP in the presence of single-stranded DNA, the ATP-dependent uptake of single-stranded DNA by duplex DNA, and the ATP-dependent hybridization of homologous single-stranded DNAs. It interacts with LexA causing its activation and leading to its autocatalytic cleavage. This chain is Protein RecA, found in Chlamydia pneumoniae (Chlamydophila pneumoniae).